The primary structure comprises 1001 residues: Translation initiation factor IF-2 (1001 aa).

The tract at residues 34-404 is disordered; sequence KSHSSTISES…SRGDRRDRKE (371 aa). Over residues 67 to 80 the composition is skewed to basic and acidic residues; sequence SRPESKEDKSDPKQ. Composition is skewed to pro residues over residues 98 to 107, 147 to 157, and 163 to 172; these read PARPTPPPRP, PTQPLAPPPVP, and PSKPAPPTPP. A compositionally biased stretch (low complexity) spans 173–190; that stretch reads AKKAAPAPRLAGPPGRTA. Composition is skewed to basic and acidic residues over residues 212–230 and 238–252; these read SLKD…EEKV and PKPK…PPRP. Acidic residues predominate over residues 332–342; that stretch reads DDDDDDLDIDG. 2 stretches are compositionally biased toward low complexity: residues 362–371 and 385–394; these read KSLAAKPSTP and AGSSAGGSSR. A compositionally biased stretch (basic and acidic residues) spans 395–404; it reads SRGDRRDRKE. The region spanning 493–666 is the tr-type G domain; that stretch reads RRPPVVTIMG…LLVSEVEELV (174 aa). Residues 502 to 509 are G1; that stretch reads GHVDHGKT. 502 to 509 lines the GTP pocket; that stretch reads GHVDHGKT. The G2 stretch occupies residues 527–531; sequence GITQH. The tract at residues 552 to 555 is G3; that stretch reads DTPG. GTP-binding positions include 552–556 and 606–609; these read DTPGH and NKVD. A G4 region spans residues 606–609; sequence NKVD. Residues 642–644 form a G5 region; it reads SAL.

Belongs to the TRAFAC class translation factor GTPase superfamily. Classic translation factor GTPase family. IF-2 subfamily.

It localises to the cytoplasm. One of the essential components for the initiation of protein synthesis. Protects formylmethionyl-tRNA from spontaneous hydrolysis and promotes its binding to the 30S ribosomal subunits. Also involved in the hydrolysis of GTP during the formation of the 70S ribosomal complex. This is Translation initiation factor IF-2 (infB) from Synechocystis sp. (strain ATCC 27184 / PCC 6803 / Kazusa).